A 781-amino-acid polypeptide reads, in one-letter code: MTSYRPEFSASEQSQIDAEFSRLASNKSVYLDHAGTTLYAESQVTAAAEQLQRNVICNPHTCRLTGDFVDQVRFKILEFFNTTAEDYHVIFTANATAALSLVAENFDFGSSGEFHFCQENHTSVLGMRERVRENGIYMLRENEISGGKHKANGKVHEVSGKTGNSLLTFSAQCNFSGYKIPLEVIEQIQIDGLAKPGKELWSSLGEKKKNMHNDYYICLDAASFVATSPLDLQKYRPDYVCLSFYKIFGYPTGVGALLVSRRGAEVFQKRRFFGGGTINYAYPHAMDYQLRETFHQRYEDGTLPFLSIVGLLEGFRTLERLVPRTDEFSTMERISRHVFGLAKYLEDQLRQLHHPNGEPLVKLYNKVGYQDKSRQGGIVAFNVRTESGSFVGFGEIACVAALHGILLRTGCFCNIGACQYYLGLDEDALDAIYKRAGRICGDYFDLIDGQPTGAVRVSFGYMTTIQDVDKLLQMLRSSYLATKPLQRIQFIEEQAEQLPPLLKERVQLLRPKLLQMAIYPVKSCAAFKIELPGSWPLTDQGLKYDREWMIVDMNGMALTQKRCTELCLIRPVIKVDQLELQFGENSTISVPLSLDDQAADTAKCVSKVCRQPVEGLDCGDRVAQWLSENLGMEGLRLLRQSGQRNSSKDQQKLSLVNQAQFLLLNKSSVRSLQFEEPLDETVDRFRANIIIDTGSAFEELTYKALSIGGIQFQVEGPCQRCDMICINQRTGERSPETLTTISRLQKGRMRFGIYITRIPQDTKELEPKEQHMTCGDVVLVE.

Lysine 246 bears the N6-(pyridoxal phosphate)lysine mark. Residue cysteine 413 is part of the active site. An MOSC domain is found at 635 to 781 (LRLLRQSGQR…MTCGDVVLVE (147 aa)). At serine 734 the chain carries Phosphoserine.

The protein belongs to the class-V pyridoxal-phosphate-dependent aminotransferase family. MOCOS subfamily. Pyridoxal 5'-phosphate serves as cofactor.

The enzyme catalyses Mo-molybdopterin + L-cysteine + AH2 = thio-Mo-molybdopterin + L-alanine + A + H2O. The protein operates within cofactor biosynthesis; molybdopterin biosynthesis. Functionally, sulfurates the molybdenum cofactor. Sulfation of molybdenum is essential for xanthine dehydrogenase (XDH) and aldehyde oxidase (ADO) enzymes in which molybdenum cofactor is liganded by 1 oxygen and 1 sulfur atom in active form. In Drosophila melanogaster (Fruit fly), this protein is Molybdenum cofactor sulfurase.